The sequence spans 221 residues: uncharacterized protein (221 aa).

The span at 1–11 shows a compositional bias: basic residues; it reads MGEKSRRKGPA. Disordered regions lie at residues 1-23 and 139-169; these read MGEK…GRTC and SNFQ…SAPE. Basic and acidic residues-rich tracts occupy residues 13–23 and 155–168; these read RHADGKLGRTC and DKRS…RSAP.

This is an uncharacterized protein from Homo sapiens (Human).